The following is a 343-amino-acid chain: Palmitoyltransferase ZDHHC4 (343 aa).

Residues Met-1–Asp-2 lie on the Lumenal side of the membrane. Residues Phe-3–Ile-23 traverse the membrane as a helical segment. Residues Phe-24–Thr-67 are Cytoplasmic-facing. The chain crosses the membrane as a helical span at residues Phe-68–Phe-88. At Gly-89 to Tyr-100 the chain is on the lumenal side. The helical transmembrane segment at Leu-101–Ala-121 threads the bilayer. Over Asn-122–Tyr-193 the chain is Cytoplasmic. The 51-residue stretch at Ser-149–Leu-199 folds into the DHHC domain. The active-site S-palmitoyl cysteine intermediate is the Cys-179. The chain crosses the membrane as a helical span at residues Phe-194 to Ala-214. The Lumenal segment spans residues Phe-215–Arg-255. A helical transmembrane segment spans residues Ile-256–Phe-276. Residues Ala-277–Lys-343 lie on the Cytoplasmic side of the membrane. The Di-lysine motif motif lies at Lys-340–Lys-343.

Belongs to the DHHC palmitoyltransferase family. In terms of assembly, interacts with CPT1A.

It localises to the endoplasmic reticulum membrane. Its subcellular location is the golgi apparatus membrane. The protein resides in the cell membrane. The enzyme catalyses L-cysteinyl-[protein] + hexadecanoyl-CoA = S-hexadecanoyl-L-cysteinyl-[protein] + CoA. Palmitoyltransferase that could catalyze the addition of palmitate onto protein substrates including the D(2) dopamine receptor DRD2, GSK3B or MAVS. Mediates GSK3B palmitoylation to prevent its AKT1-mediated phosphorylation leading to activation of the STAT3 signaling pathway. Also catalyzes MAVS palmitoylation which promotes its stabilization and activation by inhibiting 'Lys-48'- but facilitating 'Lys-63'-linked ubiquitination. The chain is Palmitoyltransferase ZDHHC4 from Mus musculus (Mouse).